The following is a 493-amino-acid chain: Glutamyl-tRNA(Gln) amidotransferase subunit A (493 aa).

Active-site charge relay system residues include lysine 79 and serine 159. Serine 183 serves as the catalytic Acyl-ester intermediate.

This sequence belongs to the amidase family. GatA subfamily. In terms of assembly, heterotrimer of A, B and C subunits.

It catalyses the reaction L-glutamyl-tRNA(Gln) + L-glutamine + ATP + H2O = L-glutaminyl-tRNA(Gln) + L-glutamate + ADP + phosphate + H(+). Functionally, allows the formation of correctly charged Gln-tRNA(Gln) through the transamidation of misacylated Glu-tRNA(Gln) in organisms which lack glutaminyl-tRNA synthetase. The reaction takes place in the presence of glutamine and ATP through an activated gamma-phospho-Glu-tRNA(Gln). This is Glutamyl-tRNA(Gln) amidotransferase subunit A from Chelativorans sp. (strain BNC1).